Consider the following 212-residue polypeptide: MTKFSVVVAGGGSTFTPGIVLMLLANQDRFPLRALKFYDNDGARQEVIAEACKVILKEKAPDIAFSYTTDPEVAFSDVDFVMAHIRVGKYPMRELDEKIPLRHGVVGQETCGPGGIAYGMRSIGGVLELVDYMEKYSPNAWMLNYSNPAAIVAEATRRLRPNAKILNICDMPIGIESRMAQIVGLQDRKQMRVRYYGLNHWWSAISRSFRKG.

Residue F4–D70 participates in NAD(+) binding. Positions 169 and 200 each coordinate Mn(2+).

Belongs to the glycosyl hydrolase 4 family.

This is Putative inactive 6-phospho-alpha-glucosidase from Escherichia coli (strain K12).